The sequence spans 391 residues: Shewanella-like protein phosphatase 2 (391 aa).

Positions 61, 63, 97, and 132 each coordinate Mn(2+). The Proton donor role is filled by His-133. Mn(2+) is bound by residues His-232 and His-295.

This sequence belongs to the metallophosphoesterase superfamily. SLP family. Mn(2+) is required as a cofactor. In terms of tissue distribution, expressed in roots and siliques (at protein level).

The protein resides in the cytoplasm. It is found in the cytosol. In terms of biological role, shows phosphatase activity, hydrolyzing the artificial substrate para-nitrophenylphosphate (pNPP) in vitro. The chain is Shewanella-like protein phosphatase 2 from Arabidopsis thaliana (Mouse-ear cress).